Consider the following 149-residue polypeptide: 3-hydroxyacyl-[acyl-carrier-protein] dehydratase FabZ (149 aa).

His-53 is an active-site residue.

Belongs to the thioester dehydratase family. FabZ subfamily.

The protein resides in the cytoplasm. It carries out the reaction a (3R)-hydroxyacyl-[ACP] = a (2E)-enoyl-[ACP] + H2O. Involved in unsaturated fatty acids biosynthesis. Catalyzes the dehydration of short chain beta-hydroxyacyl-ACPs and long chain saturated and unsaturated beta-hydroxyacyl-ACPs. This Polynucleobacter necessarius subsp. necessarius (strain STIR1) protein is 3-hydroxyacyl-[acyl-carrier-protein] dehydratase FabZ.